We begin with the raw amino-acid sequence, 746 residues long: Protein C-mannosyl-transferase DPY19L1 (746 aa).

The disordered stretch occupies residues 1–68 (MVLQARSKHR…RAETAAPAPD (68 aa)). The segment covering 14-27 (PRPPRPARSSPPPL) has biased composition (pro residues). Helical transmembrane passes span 93–113 (STLL…TQLF), 139–159 (YSYF…WMIM), 227–247 (ACFY…LFFI), 248–268 (YGTY…CFFF), 308–328 (YRGS…PWQF), 329–349 (AQFV…VGYI), 357–377 (IIYT…GNSM), 378–398 (LLTS…AMKP), 405–425 (VSEL…TVTL), 481–501 (LLLP…INDM), 520–540 (GELV…ILIM), and 562–582 (LFGW…VLAA).

It belongs to the dpy-19 family.

The protein localises to the endoplasmic reticulum membrane. The enzyme catalyses L-tryptophyl-[protein] + a di-trans,poly-cis-dolichyl beta-D-mannosyl phosphate = C-alpha-D-mannosyl-L-tryptophyl-[protein] + a di-trans,poly-cis-dolichyl phosphate + H(+). It functions in the pathway protein modification; protein glycosylation. In terms of biological role, C-mannosyltransferase that mediates the C-mannosylation tryptophan residues on target proteins. The reaction occurs on the luminal side of the endoplasmic reticulum and involves the transfer of a mannose unit from a dolichylphosphate mannose (Dol-P-Man) donor to an acceptor protein containing a WxxW consensus sequence. C-mannosylates the first two tryptophans in the WxxWxxWxxC sequence motif in thrombospondin (TSP) type-1 repeats of UNC5A. Regulates neurite extension during development. This is Protein C-mannosyl-transferase DPY19L1 (Dpy19l1) from Rattus norvegicus (Rat).